Reading from the N-terminus, the 621-residue chain is TOX high mobility group box family member 4 (621 aa).

2 disordered regions span residues 153-227 (LGLS…QKPV) and 305-333 (LDPA…ASIE). Thr-176 bears the Phosphothreonine mark. 3 positions are modified to phosphoserine: Ser-178, Ser-181, and Ser-182. Basic and acidic residues predominate over residues 183–193 (LHEDGVEDFRR). The span at 208–218 (KQKAPKKRKKK) shows a compositional bias: basic residues. A Nuclear localization signal motif is present at residues 213–218 (KKRKKK). The HMG box DNA-binding region spans 223–291 (PQKPVSAYAL…EYLKALAAYK (69 aa)). The span at 307–319 (PAPPSQTPSPPPM) shows a compositional bias: pro residues. The residue at position 313 (Thr-313) is a Phosphothreonine. Ser-315 is modified (phosphoserine). Positions 320–333 (ATVDPASPAPASIE) are enriched in low complexity. Arg-481 bears the Asymmetric dimethylarginine mark. The tract at residues 510-529 (PTVESSPERPMNNSPEAHTV) is disordered. A phosphoserine mark is found at Ser-533, Ser-550, Ser-552, Ser-560, Ser-562, and Ser-567.

In terms of assembly, component of the PNUTS-PP1 phosphatase complex, composed of PPP1R10/PNUTS, TOX4, WDR82 and PPP1CA or PPP1CB or PPP1CC. Interacts with PPP1R10/PNUTS. Interacts with FOXO1 and CREB1 (increased by cAMP); FOXO1 and CREB1 are required for full induction of TOX4-dependent activity and the interactions are inhibited by insulin.

The protein localises to the nucleus. Its subcellular location is the chromosome. With respect to regulation, in liver, recruited to target gene promoters following treatment with dexamethasone and cAMP. Binding is decreased in presence of insulin. Transcription factor that modulates cell fate reprogramming from the somatic state to the pluripotent and neuronal fate. In liver, controls the expression of hormone-regulated gluconeogenic genes such as G6PC1 and PCK1. This regulation is independent of the insulin receptor activation. Also acts as a regulatory component of protein phosphatase 1 (PP1) complexes. Component of the PNUTS-PP1 protein phosphatase complex, a PP1 complex that regulates RNA polymerase II transcription pause-release. PNUTS-PP1 also plays a role in the control of chromatin structure and cell cycle progression during the transition from mitosis into interphase. The sequence is that of TOX high mobility group box family member 4 (TOX4) from Pongo abelii (Sumatran orangutan).